Consider the following 80-residue polypeptide: Large ribosomal subunit protein bL31 (80 aa).

Zn(2+)-binding residues include C16, C18, C38, and C41.

The protein belongs to the bacterial ribosomal protein bL31 family. Type A subfamily. As to quaternary structure, part of the 50S ribosomal subunit. Zn(2+) serves as cofactor.

Its function is as follows. Binds the 23S rRNA. The sequence is that of Large ribosomal subunit protein bL31 from Mycobacterium bovis (strain ATCC BAA-935 / AF2122/97).